The sequence spans 88 residues: Alpha-latrotoxin associated low molecular weight protein (88 aa).

Residues 1-18 (MSKLFFVAFLCLIISVFA) form the signal peptide.

This sequence belongs to the arthropod CHH/MIH/GIH/VIH hormone family. As to expression, expressed by the venom gland.

It localises to the secreted. Functionally, may increase the toxicity of alpha-latrotoxin and/or other venom components. Is non-toxic to mice and to the cockroach Periplaneta americana. This Latrodectus hesperus (Western black widow spider) protein is Alpha-latrotoxin associated low molecular weight protein.